The chain runs to 663 residues: UvrABC system protein B (663 aa).

In terms of domain architecture, Helicase ATP-binding spans 26–183 (DGLESGLAKQ…KRLAEMQYTR (158 aa)). An ATP-binding site is contributed by 39-46 (GVTGSGKT). Residues 92–115 (YYDYYQPEAYVPASDTFIEKDASI) carry the Beta-hairpin motif. The Helicase C-terminal domain maps to 430–596 (QVDDLMSEIR…GINKSVEDIL (167 aa)). Residues 624–659 (AKQINALEKQMYAHAQNMEFELAAKIRDEYLLLKEQ) form the UVR domain.

It belongs to the UvrB family. As to quaternary structure, forms a heterotetramer with UvrA during the search for lesions. Interacts with UvrC in an incision complex.

It is found in the cytoplasm. The UvrABC repair system catalyzes the recognition and processing of DNA lesions. A damage recognition complex composed of 2 UvrA and 2 UvrB subunits scans DNA for abnormalities. Upon binding of the UvrA(2)B(2) complex to a putative damaged site, the DNA wraps around one UvrB monomer. DNA wrap is dependent on ATP binding by UvrB and probably causes local melting of the DNA helix, facilitating insertion of UvrB beta-hairpin between the DNA strands. Then UvrB probes one DNA strand for the presence of a lesion. If a lesion is found the UvrA subunits dissociate and the UvrB-DNA preincision complex is formed. This complex is subsequently bound by UvrC and the second UvrB is released. If no lesion is found, the DNA wraps around the other UvrB subunit that will check the other stand for damage. The chain is UvrABC system protein B from Legionella pneumophila (strain Corby).